The sequence spans 431 residues: Enolase (431 aa).

Gln-163 contacts (2R)-2-phosphoglycerate. Catalysis depends on Glu-205, which acts as the Proton donor. Asp-242, Glu-288, and Asp-315 together coordinate Mg(2+). The (2R)-2-phosphoglycerate site is built by Lys-340, Arg-369, Ser-370, and Lys-391. The Proton acceptor role is filled by Lys-340.

This sequence belongs to the enolase family. The cofactor is Mg(2+).

The protein resides in the cytoplasm. It localises to the secreted. It is found in the cell surface. The catalysed reaction is (2R)-2-phosphoglycerate = phosphoenolpyruvate + H2O. It functions in the pathway carbohydrate degradation; glycolysis; pyruvate from D-glyceraldehyde 3-phosphate: step 4/5. Catalyzes the reversible conversion of 2-phosphoglycerate (2-PG) into phosphoenolpyruvate (PEP). It is essential for the degradation of carbohydrates via glycolysis. This Bacillus mycoides (strain KBAB4) (Bacillus weihenstephanensis) protein is Enolase.